A 117-amino-acid polypeptide reads, in one-letter code: DNA-directed RNA polymerase subunit omega (117 aa).

Belongs to the RNA polymerase subunit omega family. In terms of assembly, the RNAP catalytic core consists of 2 alpha, 1 beta, 1 beta' and 1 omega subunit. When a sigma factor is associated with the core the holoenzyme is formed, which can initiate transcription.

The catalysed reaction is RNA(n) + a ribonucleoside 5'-triphosphate = RNA(n+1) + diphosphate. Its function is as follows. Promotes RNA polymerase assembly. Latches the N- and C-terminal regions of the beta' subunit thereby facilitating its interaction with the beta and alpha subunits. The chain is DNA-directed RNA polymerase subunit omega from Ruegeria sp. (strain TM1040) (Silicibacter sp.).